The chain runs to 2543 residues: Highly reducing polyketide synthase PKS2 (2543 aa).

The region spanning 4–425 (EPRIAVIGLS…GSNSAILLEG (422 aa)) is the Ketosynthase family 3 (KS3) domain. Catalysis depends on for beta-ketoacyl synthase activity residues cysteine 174, histidine 309, and histidine 349. Residues 573–902 (VFTGQGAQHA…TYLPTLFRGT (330 aa)) are malonyl-CoA:ACP transacylase (MAT) domain. The active-site For malonyltransferase activity is serine 662. Residues 969–1101 (HPLLGRKISP…GQIEAEMTDM (133 aa)) are N-terminal hotdog fold. A PKS/mFAS DH domain is found at 969–1281 (HPLLGRKISP…FRNIGSAEEV (313 aa)). The dehydratase (DH) domain stretch occupies residues 969–1283 (HPLLGRKISP…NIGSAEEVID (315 aa)). Residue histidine 1001 is the Proton acceptor; for dehydratase activity of the active site. The tract at residues 1119 to 1281 (TGLKEHDINA…FRNIGSAEEV (163 aa)) is C-terminal hotdog fold. The active-site Proton donor; for dehydratase activity is aspartate 1188. Residues 1438-1631 (SKVLGYLTEY…LPSRYGTDKP (194 aa)) are methyltransferase (CMet) domain. The interval 1847–2159 (GSPDTIYFQR…SGEHMGKMVI (313 aa)) is enoylreductase (ER) domain. The ketoreductase (KR) domain stretch occupies residues 2184-2359 (ATYLVAGGTR…YTVSIALPVV (176 aa)). One can recognise a Carrier domain in the interval 2463–2540 (DPLIGLTEAM…ALATEILSQR (78 aa)). Serine 2500 carries the O-(pantetheine 4'-phosphoryl)serine modification.

The protein operates within secondary metabolite biosynthesis. Highly reducing polyketide synthase; part of the gene cluster that mediates the biosynthesis of phomenoic acid, a long chain aliphatic carboxylic acid that does not appear to be essential for pathogenicity but may play a role in allowing to outcompete other fungi in the environmental niche via its antifungal properties. The polyketide synthase produces the long methylated aliphatic carboxylic acid chain of phomenoic acid. The cluster-specific cytochrome P450 monooxygenase may then hydroxylate the methyl group of carbon 31. The putative dehydrogenase YogA, which has no obvious role in phomenoic acid biosynthesis, may further modify phomenoic acid to produce a compound not identified yet. This is Highly reducing polyketide synthase PKS2 from Leptosphaeria maculans (strain JN3 / isolate v23.1.3 / race Av1-4-5-6-7-8) (Blackleg fungus).